The sequence spans 508 residues: Hydroxymethylglutaryl-CoA synthase, mitochondrial (508 aa).

A mitochondrion-targeting transit peptide spans 1-37; the sequence is MQRLLAPARRVLQVKRVMQESSLSPAHLLPAAQQRFS. An N6-succinyllysine modification is found at Lys52. (3S)-3-hydroxy-3-methylglutaryl-CoA-binding residues include Glu80 and Ala81. Residues Lys83 and Lys118 each carry the N6-acetyllysine; alternate modification. N6-succinyllysine; alternate occurs at positions 83 and 118. Glu132 serves as the catalytic Proton donor/acceptor. 3 residues coordinate (3S)-3-hydroxy-3-methylglutaryl-CoA: Cys166, Asn204, and Thr208. Cys166 acts as the Acyl-thioester intermediate in catalysis. N6-succinyllysine is present on Lys221. Lys243 is subject to N6-acetyllysine. An N6-acetyllysine; alternate modification is found at Lys256. N6-succinyllysine; alternate is present on Lys256. Residues Ser258 and His301 each contribute to the (3S)-3-hydroxy-3-methylglutaryl-CoA site. His301 acts as the Proton donor/acceptor in catalysis. An N6-acetyllysine modification is found at Lys306. Residue Lys310 participates in (3S)-3-hydroxy-3-methylglutaryl-CoA binding. 2 positions are modified to N6-acetyllysine; alternate: Lys310 and Lys327. 2 positions are modified to N6-succinyllysine; alternate: Lys310 and Lys327. Residue Lys333 is modified to N6-succinyllysine. N6-acetyllysine; alternate occurs at positions 342, 350, 354, and 358. Lys342, Lys350, Lys354, and Lys358 each carry N6-succinyllysine; alternate. Asn380 and Ser414 together coordinate (3S)-3-hydroxy-3-methylglutaryl-CoA. The residue at position 427 (Lys427) is an N6-acetyllysine. Ser433 bears the Phosphoserine mark. N6-acetyllysine is present on Lys437. Ser440 is subject to Phosphoserine. The residue at position 447 (Lys447) is an N6-acetyllysine; alternate. Lys447 carries the post-translational modification N6-succinyllysine; alternate. Ser456 is subject to Phosphoserine. The residue at position 473 (Lys473) is an N6-acetyllysine; alternate. Lys473 carries the N6-succinyllysine; alternate modification. Position 477 is a phosphoserine (Ser477).

It belongs to the thiolase-like superfamily. HMG-CoA synthase family. In terms of assembly, homodimer. In terms of processing, succinylated. Desuccinylated by SIRT5. Succinylation, at least at Lys-83 and Lys-310, inhibits the enzymatic activity. As to expression, liver and kidney.

It is found in the mitochondrion. It carries out the reaction acetoacetyl-CoA + acetyl-CoA + H2O = (3S)-3-hydroxy-3-methylglutaryl-CoA + CoA + H(+). It participates in metabolic intermediate biosynthesis; (R)-mevalonate biosynthesis; (R)-mevalonate from acetyl-CoA: step 2/3. Its function is as follows. Catalyzes the first irreversible step in ketogenesis, condensing acetyl-CoA to acetoacetyl-CoA to form HMG-CoA, which is converted by HMG-CoA reductase (HMGCR) into mevalonate. The protein is Hydroxymethylglutaryl-CoA synthase, mitochondrial (Hmgcs2) of Rattus norvegicus (Rat).